The primary structure comprises 774 residues: Shugoshin (774 aa).

Residues 41-105 adopt a coiled-coil conformation; that stretch reads SLRIRGLENE…AELSSLLASL (65 aa). Disordered stretches follow at residues 106 to 151, 205 to 661, and 676 to 774; these read GEPP…QEGR, SPSP…DAQL, and CASP…SMML. The segment covering 109–120 has biased composition (basic and acidic residues); that stretch reads PSKRRLSEERRY. Residues 214–224 show a composition bias toward acidic residues; it reads AEETETTEQVE. The span at 297–318 shows a compositional bias: polar residues; it reads GDNQNEPNKATKLQQGKENGNE. Basic and acidic residues predominate over residues 382-398; it reads KGKEKVDLPAPDKKSAV. A compositionally biased stretch (polar residues) spans 399–409; it reads EETQGNSTSAF. Composition is skewed to basic and acidic residues over residues 482–495 and 549–558; these read NLRD…KELF and FEKEKEKEPQ. Composition is skewed to polar residues over residues 595 to 604 and 640 to 651; these read PSVQEQSTLN and QSMSRSVPTIPT. Residues 706 to 722 are compositionally biased toward low complexity; the sequence is ASSAASTETTATASAKP. Residues 743–754 are compositionally biased toward acidic residues; sequence LAQEEEDEEDVG. The segment covering 765–774 has biased composition (basic residues); it reads RASRRRSMML.

This sequence belongs to the shugoshin family.

Its subcellular location is the nucleus. It localises to the chromosome. The protein resides in the centromere. Its function is as follows. Plays a central role in chromosome cohesion during cell division by preventing premature dissociation of cohesin complex from centromeres after prophase, when most of cohesin complex dissociates from chromosomes arms. The polypeptide is Shugoshin (sgo-1) (Neurospora crassa (strain ATCC 24698 / 74-OR23-1A / CBS 708.71 / DSM 1257 / FGSC 987)).